A 250-amino-acid polypeptide reads, in one-letter code: UDP-2,3-diacylglucosamine hydrolase (250 aa).

Asp8, His10, Asp41, Asn79, and His114 together coordinate Mn(2+). Substrate is bound at residue 79–80 (NR). 5 residues coordinate substrate: Asp122, Ser160, Asp172, Gln175, and His203. The Mn(2+) site is built by His203 and His205.

The protein belongs to the LpxH family. Requires Mn(2+) as cofactor.

Its subcellular location is the cell inner membrane. It carries out the reaction UDP-2-N,3-O-bis[(3R)-3-hydroxytetradecanoyl]-alpha-D-glucosamine + H2O = 2-N,3-O-bis[(3R)-3-hydroxytetradecanoyl]-alpha-D-glucosaminyl 1-phosphate + UMP + 2 H(+). Its pathway is glycolipid biosynthesis; lipid IV(A) biosynthesis; lipid IV(A) from (3R)-3-hydroxytetradecanoyl-[acyl-carrier-protein] and UDP-N-acetyl-alpha-D-glucosamine: step 4/6. In terms of biological role, hydrolyzes the pyrophosphate bond of UDP-2,3-diacylglucosamine to yield 2,3-diacylglucosamine 1-phosphate (lipid X) and UMP by catalyzing the attack of water at the alpha-P atom. Involved in the biosynthesis of lipid A, a phosphorylated glycolipid that anchors the lipopolysaccharide to the outer membrane of the cell. The protein is UDP-2,3-diacylglucosamine hydrolase of Xylella fastidiosa (strain M12).